A 551-amino-acid chain; its full sequence is Seventh homolog of septin 1 (551 aa).

An N-acetylserine modification is found at Ser2. The region spanning 20–339 (RGITYTMLLC…ENYRSEKLSS (320 aa)) is the Septin-type G domain. The segment at 30-37 (GPAGTGKT) is G1 motif. GTP is bound by residues 30–37 (GPAGTGKT), Gly138, 218–226 (RADSFTKEE), and Arg288. Positions 135–138 (MTHG) are G3 motif. A G4 motif region spans residues 217–220 (TRAD). The segment at 381–417 (NLRADTPRNQVSGNFKENEYEDNGEHDSAENEQEMSP) is disordered. Tyr400 is subject to Phosphotyrosine. A phosphoserine mark is found at Ser408 and Ser416. Residues 418-518 (VRQLGREIKQ…KLINQNKLNG (101 aa)) adopt a coiled-coil conformation. Residues Lys426 and Lys437 each participate in a glycyl lysine isopeptide (Lys-Gly) (interchain with G-Cter in SUMO) cross-link. Phosphoserine occurs at positions 447, 460, 519, 520, 522, and 525. A disordered region spans residues 515–551 (KLNGSSSSINSLQQSTRSQIKKNDTYTDLASIASGRD). Over residues 519-532 (SSSSINSLQQSTRS) the composition is skewed to low complexity. Thr539 bears the Phosphothreonine mark. Phosphoserine is present on residues Ser545 and Ser548.

This sequence belongs to the TRAFAC class TrmE-Era-EngA-EngB-Septin-like GTPase superfamily. Septin GTPase family. Component of the septin complex which consists of CDC3, CDC10, CDC11, CDC12 and probably SHS1 and rearranges to a cortical collar of highly ordered filaments at the mother-bud-neck. A complex formed by CDC3, CDC10, CDC11 and CDC12 is capable of forming long filaments in vitro and the components seem to be present in a 2:2:2:2 arrangement in vivo. The filaments are proposed to be formed by the end-to-end polymerization of CDC3-CDC12-CDC11 complexes with CDC10 serving as a bridge to bundle the polymers into paired filaments. Component of the GIN4 complex composed of at least BNI5, CDC3, CDC10, CDC11, CDC12, GIN4, NAP1 and SHS1. Self-associates. Interacts with CDC11 and SPA2. Phosphorylated by GIN4 and CLA4. Phosphorylation state is essential for septin ring dynamics during telophase. Post-translationally, sumoylated during mitosis on the mother cell side of the bud neck. Sumoylation probably plays a central role in regulating septin ring disassembly during the cell cycle.

It is found in the membrane. The protein resides in the bud neck. Septins are GTPases involved in cytokinesis that assemble early in the cell cycle as a patch at the incipient bud site and form a ring approximately 15 minutes before bud emergence, which transforms into an hour-glass shaped collar of cortical filaments that spans both sides of the mother-bud neck. This collar persists until just before cytokinesis, when it splits into two rings that occupy opposite sides of the neck. The septins at the bud neck serve as a structural scaffold that recruits different components involved in diverse processes at specific stages during the cell cycle. Many proteins bind asymmetrically to the septin collar. The septin assembly is regulated by protein kinases GIN4 and/or CLA4. May act by recruiting MYO1 and HOF1, a protein involved in septation, to the site of cleavage. Septins are also involved in cell morphogenesis, bud site selection, chitin deposition, cell cycle regulation, cell compartmentalization and spore wall formation. CDCd11 with SHS1 11 are involved in the recruitment of BNI5 and thereby ensure efficient localization at the bud neck of MYO1, the type II myosin of the actomyosin contractile ring. The polypeptide is Seventh homolog of septin 1 (Saccharomyces cerevisiae (strain ATCC 204508 / S288c) (Baker's yeast)).